A 151-amino-acid chain; its full sequence is Large ribosomal subunit protein uL22 (151 aa).

Residues 1–18 are compositionally biased toward polar residues; it reads MARINYSINADPENTSKA. The segment at 1–23 is disordered; that stretch reads MARINYSINADPENTSKAMGSEL.

Belongs to the universal ribosomal protein uL22 family. As to quaternary structure, part of the 50S ribosomal subunit.

In terms of biological role, this protein binds specifically to 23S rRNA. It makes multiple contacts with different domains of the 23S rRNA in the assembled 50S subunit and ribosome. Functionally, the globular domain of the protein is located near the polypeptide exit tunnel on the outside of the subunit, while an extended beta-hairpin is found that lines the wall of the exit tunnel in the center of the 70S ribosome. The sequence is that of Large ribosomal subunit protein uL22 from Methanosarcina mazei (strain ATCC BAA-159 / DSM 3647 / Goe1 / Go1 / JCM 11833 / OCM 88) (Methanosarcina frisia).